Here is a 354-residue protein sequence, read N- to C-terminus: Ferrochelatase (354 aa).

His214 and Glu295 together coordinate Fe cation.

It belongs to the ferrochelatase family.

It localises to the cytoplasm. It catalyses the reaction heme b + 2 H(+) = protoporphyrin IX + Fe(2+). The protein operates within porphyrin-containing compound metabolism; protoheme biosynthesis; protoheme from protoporphyrin-IX: step 1/1. Its function is as follows. Catalyzes the ferrous insertion into protoporphyrin IX. The chain is Ferrochelatase from Burkholderia orbicola (strain MC0-3).